Here is a 254-residue protein sequence, read N- to C-terminus: Nickel import ATP-binding protein NikD (254 aa).

The ABC transporter domain maps to 2–241 (PQQIELRNIA…PKHAVTRSLV (240 aa)). Residue 36-43 (GGSGSGKS) coordinates ATP.

Belongs to the ABC transporter superfamily. Nickel importer (TC 3.A.1.5.3) family. In terms of assembly, the complex is composed of two ATP-binding proteins (NikD and NikE), two transmembrane proteins (NikB and NikC) and a solute-binding protein (NikA).

It is found in the cell inner membrane. The enzyme catalyses Ni(2+)(out) + ATP + H2O = Ni(2+)(in) + ADP + phosphate + H(+). In terms of biological role, part of the ABC transporter complex NikABCDE involved in nickel import. Responsible for energy coupling to the transport system. The sequence is that of Nickel import ATP-binding protein NikD from Shigella sonnei (strain Ss046).